The following is a 365-amino-acid chain: Nudix hydrolase 24, chloroplastic (365 aa).

The transit peptide at 1-30 directs the protein to the chloroplast; sequence MASAFCSLCPTPTSLFSSHALIPTLQWRSS. Residues 196 to 337 form the Nudix hydrolase domain; that stretch reads GYAIHVNGYV…KDSCSLVIID (142 aa). The Nudix box motif lies at 235-256; the sequence is GGLPHGISVCENLVKECEEEAG. Mg(2+)-binding residues include glutamate 250 and glutamate 254.

Belongs to the Nudix hydrolase family. Mg(2+) is required as a cofactor. It depends on Mn(2+) as a cofactor. As to expression, expressed in leaves.

It is found in the plastid. Its subcellular location is the chloroplast. Its function is as follows. Probably mediates the hydrolysis of some nucleoside diphosphate derivatives. In Arabidopsis thaliana (Mouse-ear cress), this protein is Nudix hydrolase 24, chloroplastic (NUDT24).